The chain runs to 600 residues: DNA mismatch repair protein MutL (600 aa).

Belongs to the DNA mismatch repair MutL/HexB family.

Functionally, this protein is involved in the repair of mismatches in DNA. It is required for dam-dependent methyl-directed DNA mismatch repair. May act as a 'molecular matchmaker', a protein that promotes the formation of a stable complex between two or more DNA-binding proteins in an ATP-dependent manner without itself being part of a final effector complex. This is DNA mismatch repair protein MutL from Sinorhizobium fredii (strain NBRC 101917 / NGR234).